Reading from the N-terminus, the 332-residue chain is Biotin synthase (332 aa).

A Radical SAM core domain is found at 53-282 (YFGKKVKLNM…TKEIRISGGR (230 aa)). [4Fe-4S] cluster-binding residues include C71, C75, and C78. [2Fe-2S] cluster is bound by residues C115, C147, C207, and R277.

It belongs to the radical SAM superfamily. Biotin synthase family. In terms of assembly, homodimer. The cofactor is [4Fe-4S] cluster. [2Fe-2S] cluster is required as a cofactor.

The catalysed reaction is (4R,5S)-dethiobiotin + (sulfur carrier)-SH + 2 reduced [2Fe-2S]-[ferredoxin] + 2 S-adenosyl-L-methionine = (sulfur carrier)-H + biotin + 2 5'-deoxyadenosine + 2 L-methionine + 2 oxidized [2Fe-2S]-[ferredoxin]. Its pathway is cofactor biosynthesis; biotin biosynthesis; biotin from 7,8-diaminononanoate: step 2/2. Catalyzes the conversion of dethiobiotin (DTB) to biotin by the insertion of a sulfur atom into dethiobiotin via a radical-based mechanism. The protein is Biotin synthase of Bacillus anthracis.